Reading from the N-terminus, the 274-residue chain is Dermonecrotic toxin LarSicTox-alphaIV1 (274 aa).

His5 is a catalytic residue. Residues Glu25 and Asp27 each coordinate Mg(2+). The Nucleophile role is filled by His41. 2 cysteine pairs are disulfide-bonded: Cys45–Cys51 and Cys47–Cys192. Asp85 is a binding site for Mg(2+).

This sequence belongs to the arthropod phospholipase D family. Class II subfamily. The cofactor is Mg(2+). In terms of tissue distribution, expressed by the venom gland.

The protein resides in the secreted. The enzyme catalyses an N-(acyl)-sphingosylphosphocholine = an N-(acyl)-sphingosyl-1,3-cyclic phosphate + choline. It catalyses the reaction an N-(acyl)-sphingosylphosphoethanolamine = an N-(acyl)-sphingosyl-1,3-cyclic phosphate + ethanolamine. It carries out the reaction a 1-acyl-sn-glycero-3-phosphocholine = a 1-acyl-sn-glycero-2,3-cyclic phosphate + choline. The catalysed reaction is a 1-acyl-sn-glycero-3-phosphoethanolamine = a 1-acyl-sn-glycero-2,3-cyclic phosphate + ethanolamine. Functionally, dermonecrotic toxins cleave the phosphodiester linkage between the phosphate and headgroup of certain phospholipids (sphingolipid and lysolipid substrates), forming an alcohol (often choline) and a cyclic phosphate. This toxin acts on sphingomyelin (SM). It may also act on ceramide phosphoethanolamine (CPE), lysophosphatidylcholine (LPC) and lysophosphatidylethanolamine (LPE), but not on lysophosphatidylserine (LPS), and lysophosphatidylglycerol (LPG). It acts by transphosphatidylation, releasing exclusively cyclic phosphate products as second products. Induces dermonecrosis, hemolysis, increased vascular permeability, edema, inflammatory response, and platelet aggregation. The chain is Dermonecrotic toxin LarSicTox-alphaIV1 from Loxosceles arizonica (Arizona brown spider).